A 546-amino-acid polypeptide reads, in one-letter code: 6'''-hydroxyparomomycin C oxidase (546 aa).

The tract at residues 1 to 30 (MERLRGPSPLENTTARHPAPLGPAHRDGLE) is disordered. Catalysis depends on H475, which acts as the Proton acceptor.

The protein belongs to the GMC oxidoreductase family. The cofactor is FAD.

It participates in antibiotic biosynthesis; lividomycin biosynthesis. Functionally, glucosaminyl-6'-oxidase involved in the biosynthetic pathway of lividomycin by mediating FAD-dependent dehydrogenation of 6'''-hydroxyparomomycin to paromomycin. This is 6'''-hydroxyparomomycin C oxidase (livQ) from Streptomyces lividus.